The following is a 170-amino-acid chain: RNA pyrophosphohydrolase (170 aa).

Residues 6–149 enclose the Nudix hydrolase domain; the sequence is GFRPNVGIIL…KRDVYRRALK (144 aa). The short motif at 39–60 is the Nudix box element; that stretch reads GGIKHNESPENALYRELEEEVG.

This sequence belongs to the Nudix hydrolase family. RppH subfamily. Requires a divalent metal cation as cofactor.

Its function is as follows. Accelerates the degradation of transcripts by removing pyrophosphate from the 5'-end of triphosphorylated RNA, leading to a more labile monophosphorylated state that can stimulate subsequent ribonuclease cleavage. The polypeptide is RNA pyrophosphohydrolase (Saccharophagus degradans (strain 2-40 / ATCC 43961 / DSM 17024)).